A 469-amino-acid polypeptide reads, in one-letter code: Biotin synthase (469 aa).

Residues 51-278 (MTVKVNYLVN…DKEIRMAGGR (228 aa)) enclose the Radical SAM core domain. Cysteine 66, cysteine 70, and cysteine 73 together coordinate [4Fe-4S] cluster. [2Fe-2S] cluster-binding residues include cysteine 110, cysteine 143, cysteine 203, and arginine 273. A disordered region spans residues 326-469 (AGPDPSRDRH…GAGTSVAPNA (144 aa)). Low complexity-rich tracts occupy residues 363–384 (GSAA…APAD) and 405–428 (AGGP…MSPA).

This sequence belongs to the radical SAM superfamily. Biotin synthase family. As to quaternary structure, homodimer. [4Fe-4S] cluster is required as a cofactor. Requires [2Fe-2S] cluster as cofactor.

It catalyses the reaction (4R,5S)-dethiobiotin + (sulfur carrier)-SH + 2 reduced [2Fe-2S]-[ferredoxin] + 2 S-adenosyl-L-methionine = (sulfur carrier)-H + biotin + 2 5'-deoxyadenosine + 2 L-methionine + 2 oxidized [2Fe-2S]-[ferredoxin]. The protein operates within cofactor biosynthesis; biotin biosynthesis; biotin from 7,8-diaminononanoate: step 2/2. Functionally, catalyzes the conversion of dethiobiotin (DTB) to biotin by the insertion of a sulfur atom into dethiobiotin via a radical-based mechanism. The polypeptide is Biotin synthase (Kocuria rhizophila (strain ATCC 9341 / DSM 348 / NBRC 103217 / DC2201)).